We begin with the raw amino-acid sequence, 306 residues long: NAD kinase 1 (306 aa).

Asp67 acts as the Proton acceptor in catalysis. Residues 67 to 68, 149 to 150, Asp181, and 192 to 197 each bind NAD(+); these read DG, NE, and TGYTVS.

This sequence belongs to the NAD kinase family. A divalent metal cation is required as a cofactor.

It is found in the cytoplasm. It carries out the reaction NAD(+) + ATP = ADP + NADP(+) + H(+). Functionally, involved in the regulation of the intracellular balance of NAD and NADP, and is a key enzyme in the biosynthesis of NADP. Catalyzes specifically the phosphorylation on 2'-hydroxyl of the adenosine moiety of NAD to yield NADP. The protein is NAD kinase 1 of Trichormus variabilis (strain ATCC 29413 / PCC 7937) (Anabaena variabilis).